Consider the following 493-residue polypeptide: Cobyric acid synthase (493 aa).

The GATase cobBQ-type domain occupies 260 to 427 (RLSVAAIRLP…RHGYLQDDPA (168 aa)). H419 is a catalytic residue.

This sequence belongs to the CobB/CobQ family. CobQ subfamily.

Its pathway is cofactor biosynthesis; adenosylcobalamin biosynthesis. Functionally, catalyzes amidations at positions B, D, E, and G on adenosylcobyrinic A,C-diamide. NH(2) groups are provided by glutamine, and one molecule of ATP is hydrogenolyzed for each amidation. This Corynebacterium efficiens (strain DSM 44549 / YS-314 / AJ 12310 / JCM 11189 / NBRC 100395) protein is Cobyric acid synthase.